Consider the following 169-residue polypeptide: uncharacterized protein (169 aa).

In terms of domain architecture, HD spans 18–130 (VVEHCLAVSE…VAHADNLIFG (113 aa)).

This is an uncharacterized protein from Methanocaldococcus jannaschii (strain ATCC 43067 / DSM 2661 / JAL-1 / JCM 10045 / NBRC 100440) (Methanococcus jannaschii).